We begin with the raw amino-acid sequence, 261 residues long: Protein FAM216A (261 aa).

Residues 1 to 52 (MPSRCPGVAGPPALARTEGSEGSAGQSYHQNSKGTGEQHKAERIKEGHRMSS) are disordered. Residues 23–35 (SAGQSYHQNSKGT) are compositionally biased toward polar residues. Positions 36 to 49 (GEQHKAERIKEGHR) are enriched in basic and acidic residues.

Belongs to the FAM216 family.

This Rattus norvegicus (Rat) protein is Protein FAM216A (Fam216a).